Reading from the N-terminus, the 343-residue chain is Methionine import ATP-binding protein MetN (343 aa).

An ABC transporter domain is found at 2-241 (IKLFHINKIF…PKTPIAQAFI (240 aa)). 38 to 45 (GSSGAGKS) lines the ATP pocket.

The protein belongs to the ABC transporter superfamily. Methionine importer (TC 3.A.1.24) family. In terms of assembly, the complex is composed of two ATP-binding proteins (MetN), two transmembrane proteins (MetI) and a solute-binding protein (MetQ).

The protein localises to the cell inner membrane. It carries out the reaction L-methionine(out) + ATP + H2O = L-methionine(in) + ADP + phosphate + H(+). The catalysed reaction is D-methionine(out) + ATP + H2O = D-methionine(in) + ADP + phosphate + H(+). Functionally, part of the ABC transporter complex MetNIQ involved in methionine import. Responsible for energy coupling to the transport system. The chain is Methionine import ATP-binding protein MetN from Photorhabdus laumondii subsp. laumondii (strain DSM 15139 / CIP 105565 / TT01) (Photorhabdus luminescens subsp. laumondii).